Here is an 858-residue protein sequence, read N- to C-terminus: MKKTFVKILSKSYVEGYPVGFFIGLIILAIFGSMVCIFSFMHYSEEENSNIQMDLERSSKQIIHNIQMNAMYLLSSIDTLKALYYVNPNFDRNDFNVFLNTTLKNSEFQYLFWIKKINNNDRNCFEEKFSKEIKDTFQIYSFDENTNSIHVAKNKSSYFPILHAFPDINKDIIGLDINSTDYMNETIKKSIFNKKPTVHLNKKVLLSKRNIDILIVSPIIVTKTLESTNETMEDMSHISSGLFLMEKNVQASRIEVENGNDFTIFLSTTNGEIVYQENYLNFKTLYQVHESGLFEDRLKYESSLKIADCVLKLWIFTTEEYENNSKTYLPLLVSIISAVILVLLITYSVDQRKQKSLIAKIMREKNNLINKILPLEVSVKLENGEDVVAERSNNACVFFLDIAGFTRFSSIHSPEQVIQVLIKIFNSMDLLCAKHGIEKIKTIGDAYMATCGIFPKCDDIRHNTYKMLGFAMDVLEFIPKEMSFHLGLQVRVGIHCGPVISGVISGYAKPHFDVWGDTVNVASRMESTGIAGQIHVSDRVYQLGKEDFNFSERCDIIHVKGKGRMKTWYLMGKKSSDFSLKKDFSRSRVQPSLFNRKQSHVHCIYPEFPSGLQALNIENNLNNTDAGCENCSKILKKTYAYSPDHSTSNYYYHGDDNSPPPPSLNSNDLIDGSEYHDDPFPSDSNVGYHDTSKDIKEDENEQNETLLFNQEQLKKKQIENIQRDLSLNDSIEAIKILNNNNNNNINDNNINNTNLNNNNNDININNSDNVNNYENNNNFSDKIENNDGDNNNINDNNYKSTNENNIKSKTLFKDSKSLINDIKMAKENCDNNDDNNNNNNNNNNNNNNDENVESKKNK.

Over M1–P18 the chain is Cytoplasmic. The helical; Signal-anchor for type II membrane protein transmembrane segment at V19–M41 threads the bilayer. The Extracellular portion of the chain corresponds to H42–K858. One can recognise a CHASE domain in the interval V86 to T317. In terms of domain architecture, Guanylate cyclase spans C396 to E526. Mg(2+) contacts are provided by D401, I402, and D445. Disordered stretches follow at residues Y650 to T691, S767 to E803, and E827 to K858. 3 stretches are compositionally biased toward low complexity: residues S767–N778, G788–N797, and D834–D849.

This sequence belongs to the adenylyl cyclase class-4/guanylyl cyclase family.

It localises to the membrane. The enzyme catalyses ATP = 3',5'-cyclic AMP + diphosphate. Its activity is regulated as follows. Insensitive to guanine nucleotides. Has a large extracellular domain which may be involved in the recognition of an extracellular signal present during germination, leading to activation or inhibition of cAMP synthesis by the cytoplasmic domain. The chain is Adenylate cyclase, germination specific (acgA) from Dictyostelium discoideum (Social amoeba).